We begin with the raw amino-acid sequence, 301 residues long: MDTNSRNRLIKSASYLSVTTALIILSIKLYAWVVTDSQSILAALIDSMLDITSSFINLIALRFALQPPDHHHRFGYEKLQDLTIFSQSIFFFASAFFVGFSSVKSLFEKTKPENISDGTTVMYVCIFLTIILVFYQTYVIKKTGSEIVKADKLHYFTDLLTNVIVIISINLSDYFWFVDPLFGVVISLYIFHSSYSLFKKAFKNLVDHELPEQDRQKIISIVNNHLGAKGMHEMKTRYAGQKAFIQCHLEMDGNMSLYNAHKISDEIAFEILQEFPEAEIIIHQDPFGIEEHVKYREYIVR.

The next 5 membrane-spanning stretches (helical) occupy residues 15-35, 40-60, 83-103, 120-140, and 171-191; these read YLSV…WVVT, ILAA…NLIA, TIFS…FSSV, TVMY…TYVI, and LSDY…LYIF.

The protein belongs to the cation diffusion facilitator (CDF) transporter (TC 2.A.4) family.

Its subcellular location is the cell membrane. The protein is Protein p34 (p34) of Rickettsia rickettsii (strain Sheila Smith).